Reading from the N-terminus, the 1276-residue chain is Histone-lysine N-methyltransferase PRDM16 (1276 aa).

The span at 1-10 (MRSKARARKL) shows a compositional bias: basic residues. Residues 1 to 68 (MRSKARARKL…DFTPKEGSPY (68 aa)) are disordered. An SET domain is found at 82–211 (ADFELRESSI…PGEELLVHVK (130 aa)). Residues 230–253 (FRCDECDELFQSKLDLRRHKKYTC) form a C2H2-type 1; atypical zinc finger. 5 C2H2-type zinc fingers span residues 281 to 303 (HECK…MVIH), 309 to 331 (YKCD…QMSH), 337 to 360 (FECE…RSQH), 366 to 388 (HACP…KHIH), and 394 to 416 (FICE…KRMH). The segment at 423–445 (IKCKDCGQMFSTTSSLNKHRRFC) adopts a C2H2-type 7; atypical zinc-finger fold. Disordered stretches follow at residues 533–657 (SLLK…APPG) and 772–804 (PFDL…QPLD). The segment covering 561–570 (AVSNSSQGTT) has biased composition (polar residues). Positions 575–597 (PEEKFESRLEDSCVEKLKTRSSD) are enriched in basic and acidic residues. The span at 609–624 (TTTGTDLDTTTGTGSD) shows a compositional bias: low complexity. Residues 632-642 (DPDKDKGKGKS) are compositionally biased toward basic and acidic residues. Positions 679 to 1038 (DEQLLTATGA…KHEHENAPVS (360 aa)) are interaction with CTBP1, CTBP2 and ZNF516. Positions 739–1276 (PFTDRALAHN…SGAFHPINHL (538 aa)) are mediates interaction with SKI and regulation of TGF-beta signaling. 3 C2H2-type zinc fingers span residues 951–973 (YTCR…LRTH), 979–1002 (YRCK…RNIH), and 1008–1032 (FKCH…KHEH). Disordered stretches follow at residues 1033–1065 (ENAP…HALL) and 1105–1163 (AQCP…EPAA). Residues 1047-1058 (HLGTSASSPTSE) are compositionally biased toward polar residues. A compositionally biased stretch (acidic residues) spans 1116 to 1133 (EDVEEEDDDDLEEDDEDS).

It belongs to the PRDM16 family. As to quaternary structure, interacts with CEBPA, CEBPB and CEBPD; the interaction is direct. Interacts with PPARG and PPARA; controls brown adipocytes differentiation. Interacts with CTBP1 and CTBP2; represses the expression of WAT-specific genes. Interacts with PPARGC1A and PPARGC1B; interaction with PPARGC1A or PPARGC1B activates the transcription of BAT-specific gene. Interacts with HDAC1, SKI, SMAD2 and SMAD3; the interaction with SKI promotes the recruitment of SMAD3-HDAC1 complex on the promoter of TGF-beta target genes. Interacts with ZNF516; the interaction is direct and may play a role in the transcription of brown adipose tissue-specific gene. In terms of tissue distribution, expressed in uterus and kidney. Expressed in both cardiomyocytes and interstitial cells.

Its subcellular location is the nucleus. It localises to the cytoplasm. The catalysed reaction is L-lysyl(9)-[histone H3] + S-adenosyl-L-methionine = N(6)-methyl-L-lysyl(9)-[histone H3] + S-adenosyl-L-homocysteine + H(+). Functionally, binds DNA and functions as a transcriptional regulator. Displays histone methyltransferase activity and monomethylates 'Lys-9' of histone H3 (H3K9me1) in vitro. Probably catalyzes the monomethylation of free histone H3 in the cytoplasm which is then transported to the nucleus and incorporated into nucleosomes where SUV39H methyltransferases use it as a substrate to catalyze histone H3 'Lys-9' trimethylation. Likely to be one of the primary histone methyltransferases along with MECOM/PRDM3 that direct cytoplasmic H3K9me1 methylation. Functions in the differentiation of brown adipose tissue (BAT) which is specialized in dissipating chemical energy in the form of heat in response to cold or excess feeding while white adipose tissue (WAT) is specialized in the storage of excess energy and the control of systemic metabolism. Together with CEBPB, regulates the differentiation of myoblastic precursors into brown adipose cells. Functions as a repressor of TGF-beta signaling. In terms of biological role, binds DNA and functions as a transcriptional regulator. Functions as a repressor of TGF-beta signaling. May regulate granulocyte differentiation. The sequence is that of Histone-lysine N-methyltransferase PRDM16 from Homo sapiens (Human).